Here is a 910-residue protein sequence, read N- to C-terminus: Short transient receptor potential channel 3 (910 aa).

The interval 1-93 (MSTKVKKCRE…VRGPAFMFGA (93 aa)) is disordered. Over 1 to 448 (MSTKVKKCRE…KILRSPFMKF (448 aa)) the chain is Cytoplasmic. Acidic residues predominate over residues 19-29 (PEEEEDGEAEG). A compositionally biased stretch (pro residues) spans 48-58 (PPCPRAPPSPG). Residues 59–68 (PDASSEGSPS) show a composition bias toward low complexity. ANK repeat units lie at residues 100-129 (AEEERFLDAAEYGNIPVVRKMLEESRTLNV), 135-164 (MGQNALQLAVGNEHLEVTELLLKKENLARI), 166-192 (DALLLAISKGYVRIVEAILGHPGFAAS), and 221-250 (PDITPIILAAHCHKYEVVHLLLLKGARIER). Glutamate 147 contributes to the Ca(2+) binding site. A helical membrane pass occupies residues 449–466 (VAHAASFIIFLGLLVFNA). Topologically, residues 467–497 (SDRFEGITTLPNITVIDYPKQIFRVKTTQFT) are extracellular. N-linked (GlcNAc...) asparagine glycosylation is present at asparagine 478. Residues 498 to 516 (WTEMLIMVWVLGMMWSECK) form a helical membrane-spanning segment. Residues glutamate 514, glutamate 517, and asparagine 532 each contribute to the Ca(2+) site. Residues 517-529 (ELWLEGPREYIVQ) are Cytoplasmic-facing. The helical transmembrane segment at 530 to 551 (LWNVLDFGMLSIFIAAFTARFL) threads the bilayer. Residues 552–595 (AFLQATKAQQYVDSHVQESDLSEVTLPPEVQYFTYARDKWLPSD) are Extracellular-facing. Residues 596–619 (PQIISEGLYAIAVVLSFSRIAYIL) form a helical membrane-spanning segment. Residues 620 to 638 (PANESFGPLQISLGRTVKD) are Cytoplasmic-facing. An ANK 5 repeat occupies 623–652 (ESFGPLQISLGRTVKDIFKFMVLFIMVFLA). Residues 639–662 (IFKFMVLFIMVFLAFMIGMFILYS) traverse the membrane as a helical segment. Topologically, residues 663–702 (YYLGAKVNPAFTTVEESFKTLFWSIFGLSEVTSVVLKYDH) are extracellular. The helical transmembrane segment at 703-728 (KFIENIGYVLYGIYNVTMVVVLLNML) threads the bilayer. Residues 729-910 (IAMINSSYQE…KLNPSVLRCE (182 aa)) lie on the Cytoplasmic side of the membrane. Ca(2+)-binding residues include glutamate 860, glutamate 863, glutamate 865, and aspartate 872.

The protein belongs to the transient receptor (TC 1.A.4) family. STrpC subfamily. TRPC3 sub-subfamily. Homotetramer. Interacts with ITPR1, ITPR3, MX1 and RNF24. Interacts with JPH2; the interaction is involved in maintaining Ca(2+) homeostasis in skeletal muscle and is mediated by JPH2 'Ser-165' phosphorylation. As to expression, abundantly expressed in brain. Concentrated in cerebellar Purkinje cells and sparsely localized in cerebellar granule lyer, pontine nuclei and thalamus. Lower levels detected in other tissues.

The protein localises to the cell membrane. The catalysed reaction is Ca(2+)(in) = Ca(2+)(out). Activated by diacylglycerol (DAG) in a membrane-delimited fashion, independently of protein kinase C. Activated by inositol 1,4,5-triphosphate receptors (ITPR) with bound IP3. May be activated by internal calcium store depletion. Inhibited by intracellular Ca(2+). Functionally, forms a receptor-activated non-selective calcium permeant cation channel. May be operated by a phosphatidylinositol second messenger system activated by receptor tyrosine kinases or G-protein coupled receptors. The chain is Short transient receptor potential channel 3 (Trpc3) from Mus musculus (Mouse).